Reading from the N-terminus, the 732-residue chain is Catalase-peroxidase (732 aa).

The interval 1-26 (MDAKTDDQGGKCPFPHGGGSRGHRNR) is disordered. The segment at residues 97–219 (WHSAGTYRTT…LGAVQMGLIY (123 aa)) is a cross-link (tryptophyl-tyrosyl-methioninium (Trp-Tyr) (with M-245)). Histidine 98 acts as the Proton acceptor in catalysis. Residues 219–245 (YVNPEGPNGNPDPVAAAKDIRETFARM) constitute a cross-link (tryptophyl-tyrosyl-methioninium (Tyr-Met) (with W-97)). Position 260 (histidine 260) interacts with heme b.

This sequence belongs to the peroxidase family. Peroxidase/catalase subfamily. As to quaternary structure, homodimer or homotetramer. Heme b is required as a cofactor. In terms of processing, formation of the three residue Trp-Tyr-Met cross-link is important for the catalase, but not the peroxidase activity of the enzyme.

It catalyses the reaction H2O2 + AH2 = A + 2 H2O. The enzyme catalyses 2 H2O2 = O2 + 2 H2O. Its function is as follows. Bifunctional enzyme with both catalase and broad-spectrum peroxidase activity. This Rhodopseudomonas palustris (strain BisB5) protein is Catalase-peroxidase.